The chain runs to 130 residues: Small ribosomal subunit protein uS8 (130 aa).

The protein belongs to the universal ribosomal protein uS8 family. Part of the 30S ribosomal subunit. Contacts proteins S5 and S12.

Functionally, one of the primary rRNA binding proteins, it binds directly to 16S rRNA central domain where it helps coordinate assembly of the platform of the 30S subunit. The protein is Small ribosomal subunit protein uS8 of Shewanella baltica (strain OS223).